Reading from the N-terminus, the 157-residue chain is Crossover junction endodeoxyribonuclease RuvC (157 aa).

Active-site residues include Asp7, Glu67, and Asp140. Asp7, Glu67, and Asp140 together coordinate Mg(2+).

The protein belongs to the RuvC family. As to quaternary structure, homodimer which binds Holliday junction (HJ) DNA. The HJ becomes 2-fold symmetrical on binding to RuvC with unstacked arms; it has a different conformation from HJ DNA in complex with RuvA. In the full resolvosome a probable DNA-RuvA(4)-RuvB(12)-RuvC(2) complex forms which resolves the HJ. The cofactor is Mg(2+).

It is found in the cytoplasm. It catalyses the reaction Endonucleolytic cleavage at a junction such as a reciprocal single-stranded crossover between two homologous DNA duplexes (Holliday junction).. The RuvA-RuvB-RuvC complex processes Holliday junction (HJ) DNA during genetic recombination and DNA repair. Endonuclease that resolves HJ intermediates. Cleaves cruciform DNA by making single-stranded nicks across the HJ at symmetrical positions within the homologous arms, yielding a 5'-phosphate and a 3'-hydroxyl group; requires a central core of homology in the junction. The consensus cleavage sequence is 5'-(A/T)TT(C/G)-3'. Cleavage occurs on the 3'-side of the TT dinucleotide at the point of strand exchange. HJ branch migration catalyzed by RuvA-RuvB allows RuvC to scan DNA until it finds its consensus sequence, where it cleaves and resolves the cruciform DNA. The chain is Crossover junction endodeoxyribonuclease RuvC from Rickettsia bellii (strain OSU 85-389).